Here is a 928-residue protein sequence, read N- to C-terminus: 2-oxoglutarate dehydrogenase E1 component (928 aa).

Belongs to the alpha-ketoglutarate dehydrogenase family. As to quaternary structure, homodimer. Part of the 2-oxoglutarate dehydrogenase (OGDH) complex composed of E1 (2-oxoglutarate dehydrogenase), E2 (dihydrolipoamide succinyltransferase) and E3 (dihydrolipoamide dehydrogenase); the complex contains multiple copies of the three enzymatic components (E1, E2 and E3). Requires thiamine diphosphate as cofactor.

The enzyme catalyses N(6)-[(R)-lipoyl]-L-lysyl-[protein] + 2-oxoglutarate + H(+) = N(6)-[(R)-S(8)-succinyldihydrolipoyl]-L-lysyl-[protein] + CO2. E1 component of the 2-oxoglutarate dehydrogenase (OGDH) complex which catalyzes the decarboxylation of 2-oxoglutarate, the first step in the conversion of 2-oxoglutarate to succinyl-CoA and CO(2). This chain is 2-oxoglutarate dehydrogenase E1 component (sucA), found in Rickettsia conorii (strain ATCC VR-613 / Malish 7).